Consider the following 278-residue polypeptide: MVYQKQEPKKKKAIKPYHRIKAHANPASDYNFYYPTGPESYDWTKNYPQQAMNEKKVEIADVGCGYGGLLISLSSLFPERLSVGMELRDKVVQYVEERIDKLREKHVGQFQNISVIRTNAMKYLPNYFEKGQLQKIFFLFPDPHFKKATHKRRIISPTLLSEYAYILAPGAYAYFISDVEELYLWMFEHFKNHPLFEQVERDIAENDSCIPLIVNSTEEGRKVNRIDGKKWFAVFRRITDPSKKDLTFKNYTLTSPKEIDSTTTTTTSTATITEVESK.

S-adenosyl-L-methionine is bound by residues Gly-63, 86 to 87 (EL), 119 to 120 (NA), and Leu-139. Asp-142 is an active-site residue. 217 to 219 (TEE) lines the S-adenosyl-L-methionine pocket. The segment at 259–278 (IDSTTTTTTSTATITEVESK) is disordered. The segment covering 261–278 (STTTTTTSTATITEVESK) has biased composition (low complexity).

This sequence belongs to the class I-like SAM-binding methyltransferase superfamily. TrmB family.

The protein resides in the nucleus. It carries out the reaction guanosine(46) in tRNA + S-adenosyl-L-methionine = N(7)-methylguanosine(46) in tRNA + S-adenosyl-L-homocysteine. The protein operates within tRNA modification; N(7)-methylguanine-tRNA biosynthesis. Functionally, catalyzes the formation of N(7)-methylguanine at position 46 (m7G46) in tRNA. This Dictyostelium discoideum (Social amoeba) protein is tRNA (guanine-N(7)-)-methyltransferase (mettl1).